The sequence spans 273 residues: Pyridoxal phosphate homeostasis protein (273 aa).

At Ser6 the chain carries Phosphoserine. Lys47 bears the N6-(pyridoxal phosphate)lysine mark. The residue at position 69 (Tyr69) is a Phosphotyrosine. Lys125 carries the post-translational modification N6-succinyllysine. Phosphoserine is present on residues Ser226 and Ser244. Positions Asp251–Ala260 are enriched in basic and acidic residues. Residues Asp251–His273 are disordered.

This sequence belongs to the pyridoxal phosphate-binding protein YggS/PROSC family.

Pyridoxal 5'-phosphate (PLP)-binding protein, which may be involved in intracellular homeostatic regulation of pyridoxal 5'-phosphate (PLP), the active form of vitamin B6. The chain is Pyridoxal phosphate homeostasis protein from Bos taurus (Bovine).